The primary structure comprises 662 residues: Rap guanine nucleotide exchange factor-like 1 (662 aa).

A disordered region spans residues 1-149 (MKPLEKFLKK…PPWAPLGAPE (149 aa)). The segment covering 20 to 48 (VAGGPGGGLGSCGGPGGGGGPGGGGGPAG) has biased composition (gly residues). Positions 49–64 (GQRSLQRRQSVSRLLL) are enriched in low complexity. Pro residues predominate over residues 73–82 (AEPGLEPPVP). Residues 120–135 (LRSPSSYSSDELSPGE) are compositionally biased toward low complexity. The 237-residue stretch at 424 to 660 (EPEDVANHLT…FELSYKLEAN (237 aa)) folds into the Ras-GEF domain.

Probable guanine nucleotide exchange factor (GEF). The chain is Rap guanine nucleotide exchange factor-like 1 (RAPGEFL1) from Homo sapiens (Human).